The chain runs to 136 residues: UPF0310 protein HH_1062 (136 aa).

The protein belongs to the UPF0310 family.

The sequence is that of UPF0310 protein HH_1062 from Helicobacter hepaticus (strain ATCC 51449 / 3B1).